The primary structure comprises 31 residues: Protamine-1B (31 aa).

Positions 1-31 (MPRRRRASRRIRRRRRPRVSRRRRRGGRRRR) are disordered.

Testis.

Its subcellular location is the nucleus. The protein resides in the chromosome. In terms of biological role, protamines substitute for histones in the chromatin of sperm during the haploid phase of spermatogenesis. They compact sperm DNA into a highly condensed, stable and inactive complex. This is Protamine-1B from Oncorhynchus mykiss (Rainbow trout).